The following is a 200-amino-acid chain: UPF0301 protein BR0480/BS1330_I0481 (200 aa).

This sequence belongs to the UPF0301 (AlgH) family.

This chain is UPF0301 protein BR0480/BS1330_I0481, found in Brucella suis biovar 1 (strain 1330).